The sequence spans 161 residues: Allophycocyanin beta chain (161 aa).

An N4-methylasparagine modification is found at N71. C81 is a (2R,3E)-phycocyanobilin binding site.

Belongs to the phycobiliprotein family. As to quaternary structure, heterodimer of an alpha and a beta chain. In terms of processing, contains one covalently linked phycocyanobilin chromophore.

The protein resides in the plastid. Its subcellular location is the chloroplast thylakoid membrane. In terms of biological role, light-harvesting photosynthetic bile pigment-protein from the phycobiliprotein complex. Allophycocyanin has a maximum absorption at approximately 650 nanometers. In Pyropia haitanensis (Red seaweed), this protein is Allophycocyanin beta chain (apcB).